A 157-amino-acid chain; its full sequence is uncharacterized protein (157 aa).

Positions 9-154 (LLINYKTLDE…ETNLNAVTNE (146 aa)) constitute an N-acetyltransferase domain.

This is an uncharacterized protein from Bacillus cereus (strain ATCC 14579 / DSM 31 / CCUG 7414 / JCM 2152 / NBRC 15305 / NCIMB 9373 / NCTC 2599 / NRRL B-3711).